A 490-amino-acid chain; its full sequence is Bifunctional protein GlmU (490 aa).

Positions methionine 1–arginine 241 are pyrophosphorylase. UDP-N-acetyl-alpha-D-glucosamine contacts are provided by residues leucine 12–glycine 15, lysine 26, glutamine 83, glycine 88–threonine 89, serine 112–aspartate 114, glycine 151, glutamate 166, asparagine 181, and asparagine 239. Aspartate 114 lines the Mg(2+) pocket. A Mg(2+)-binding site is contributed by asparagine 239. Residues valine 242–alanine 262 are linker. The interval glycine 263–glutamate 490 is N-acetyltransferase. Arginine 344 and lysine 362 together coordinate UDP-N-acetyl-alpha-D-glucosamine. Histidine 374 functions as the Proton acceptor in the catalytic mechanism. Tyrosine 377 and asparagine 388 together coordinate UDP-N-acetyl-alpha-D-glucosamine. Acetyl-CoA is bound by residues alanine 391, asparagine 397 to tyrosine 398, serine 416, and alanine 434. The tract at residues arginine 462 to glutamate 490 is disordered. Positions glycine 467–glutamate 490 are enriched in low complexity.

This sequence in the N-terminal section; belongs to the N-acetylglucosamine-1-phosphate uridyltransferase family. It in the C-terminal section; belongs to the transferase hexapeptide repeat family. In terms of assembly, homotrimer. Requires Mg(2+) as cofactor.

It is found in the cytoplasm. The catalysed reaction is alpha-D-glucosamine 1-phosphate + acetyl-CoA = N-acetyl-alpha-D-glucosamine 1-phosphate + CoA + H(+). It carries out the reaction N-acetyl-alpha-D-glucosamine 1-phosphate + UTP + H(+) = UDP-N-acetyl-alpha-D-glucosamine + diphosphate. It participates in nucleotide-sugar biosynthesis; UDP-N-acetyl-alpha-D-glucosamine biosynthesis; N-acetyl-alpha-D-glucosamine 1-phosphate from alpha-D-glucosamine 6-phosphate (route II): step 2/2. Its pathway is nucleotide-sugar biosynthesis; UDP-N-acetyl-alpha-D-glucosamine biosynthesis; UDP-N-acetyl-alpha-D-glucosamine from N-acetyl-alpha-D-glucosamine 1-phosphate: step 1/1. It functions in the pathway bacterial outer membrane biogenesis; LPS lipid A biosynthesis. Catalyzes the last two sequential reactions in the de novo biosynthetic pathway for UDP-N-acetylglucosamine (UDP-GlcNAc). The C-terminal domain catalyzes the transfer of acetyl group from acetyl coenzyme A to glucosamine-1-phosphate (GlcN-1-P) to produce N-acetylglucosamine-1-phosphate (GlcNAc-1-P), which is converted into UDP-GlcNAc by the transfer of uridine 5-monophosphate (from uridine 5-triphosphate), a reaction catalyzed by the N-terminal domain. The chain is Bifunctional protein GlmU from Mycobacterium avium (strain 104).